The sequence spans 156 residues: ATP synthase subunit b (156 aa).

A helical membrane pass occupies residues 11 to 31 (AIAFVLFVLFCMKYIWPPIMA).

It belongs to the ATPase B chain family. As to quaternary structure, F-type ATPases have 2 components, F(1) - the catalytic core - and F(0) - the membrane proton channel. F(1) has five subunits: alpha(3), beta(3), gamma(1), delta(1), epsilon(1). F(0) has three main subunits: a(1), b(2) and c(10-14). The alpha and beta chains form an alternating ring which encloses part of the gamma chain. F(1) is attached to F(0) by a central stalk formed by the gamma and epsilon chains, while a peripheral stalk is formed by the delta and b chains.

The protein resides in the cell inner membrane. F(1)F(0) ATP synthase produces ATP from ADP in the presence of a proton or sodium gradient. F-type ATPases consist of two structural domains, F(1) containing the extramembraneous catalytic core and F(0) containing the membrane proton channel, linked together by a central stalk and a peripheral stalk. During catalysis, ATP synthesis in the catalytic domain of F(1) is coupled via a rotary mechanism of the central stalk subunits to proton translocation. In terms of biological role, component of the F(0) channel, it forms part of the peripheral stalk, linking F(1) to F(0). The sequence is that of ATP synthase subunit b from Yersinia enterocolitica serotype O:8 / biotype 1B (strain NCTC 13174 / 8081).